Consider the following 325-residue polypeptide: Cln5-like protein 2 (325 aa).

A signal peptide spans 1–19 (MNKLIFIIICLGIVDKTIS). N-linked (GlcNAc...) asparagine glycans are attached at residues Asn88, Asn117, Asn133, Asn163, Asn182, Asn189, Asn238, and Asn262.

This sequence belongs to the CLN5 family.

This is Cln5-like protein 2 (cln5lb) from Dictyostelium discoideum (Social amoeba).